The sequence spans 73 residues: uncharacterized protein (73 aa).

This is an uncharacterized protein from Caprine arthritis encephalitis virus (CAEV).